We begin with the raw amino-acid sequence, 65 residues long: Large ribosomal subunit protein bL35 (65 aa).

The disordered stretch occupies residues 1–26; that stretch reads MPKMKTHRGAAKRFRKTGTGKLKRGK.

Belongs to the bacterial ribosomal protein bL35 family.

The protein is Large ribosomal subunit protein bL35 of Clostridium beijerinckii (strain ATCC 51743 / NCIMB 8052) (Clostridium acetobutylicum).